The sequence spans 291 residues: Elongation factor Ts (291 aa).

The segment at 79 to 82 is involved in Mg(2+) ion dislocation from EF-Tu; it reads TDFV.

This sequence belongs to the EF-Ts family.

The protein resides in the cytoplasm. Associates with the EF-Tu.GDP complex and induces the exchange of GDP to GTP. It remains bound to the aminoacyl-tRNA.EF-Tu.GTP complex up to the GTP hydrolysis stage on the ribosome. This Ruegeria pomeroyi (strain ATCC 700808 / DSM 15171 / DSS-3) (Silicibacter pomeroyi) protein is Elongation factor Ts.